Reading from the N-terminus, the 308-residue chain is GATA transcription factor 9 (308 aa).

Residues 34-57 (DDGLNTLPDSSTLSTGTLTDSSNS) are disordered. Over residues 39–57 (TLPDSSTLSTGTLTDSSNS) the composition is skewed to low complexity. The Nuclear localization signal signature appears at 142–149 (KARSKRSR). The segment at 193-247 (SGGGRRCLHCATEKTPQWRTGPMGPKTLCNACGVRYKSGRLVPEYRPASSPTFVM) adopts a GATA-type zinc-finger fold.

Belongs to the type IV zinc-finger family. Class A subfamily.

The protein resides in the nucleus. Functionally, transcriptional activator that specifically binds 5'-GATA-3' or 5'-GAT-3' motifs within gene promoters. May be involved in the regulation of some light-responsive genes. This Arabidopsis thaliana (Mouse-ear cress) protein is GATA transcription factor 9 (GATA9).